We begin with the raw amino-acid sequence, 434 residues long: Mitochondrial distribution and morphology protein 12 (434 aa).

Positions 1-434 (MSIDIDWERA…VYPSFWTFLV (434 aa)) constitute an SMP-LTD domain. A compositionally biased stretch (acidic residues) spans 70–83 (YEEDDNENFSESSE). 2 disordered regions span residues 70–141 (YEED…LRSP) and 181–275 (TPLG…DDLP). Residues 86 to 97 (SPTREPVDRYGS) are compositionally biased toward basic and acidic residues. The segment covering 215 to 237 (SAQSRPSTANTGNTLLSRGSMSS) has biased composition (polar residues).

The protein belongs to the MDM12 family. Component of the ER-mitochondria encounter structure (ERMES) or MDM complex, composed of MMM1, MDM10, MDM12 and MDM34. An MMM1 homodimer associates with one molecule of MDM12 on each side in a pairwise head-to-tail manner, and the SMP-LTD domains of MMM1 and MDM12 generate a continuous hydrophobic tunnel for phospholipid trafficking.

Its subcellular location is the mitochondrion outer membrane. It is found in the endoplasmic reticulum membrane. Component of the ERMES/MDM complex, which serves as a molecular tether to connect the endoplasmic reticulum (ER) and mitochondria. Components of this complex are involved in the control of mitochondrial shape and protein biogenesis, and function in nonvesicular lipid trafficking between the ER and mitochondria. MDM12 is required for the interaction of the ER-resident membrane protein MMM1 and the outer mitochondrial membrane-resident beta-barrel protein MDM10. The MDM12-MMM1 subcomplex functions in the major beta-barrel assembly pathway that is responsible for biogenesis of all mitochondrial outer membrane beta-barrel proteins, and acts in a late step after the SAM complex. The MDM10-MDM12-MMM1 subcomplex further acts in the TOM40-specific pathway after the action of the MDM12-MMM1 complex. Essential for establishing and maintaining the structure of mitochondria and maintenance of mtDNA nucleoids. This Blastomyces gilchristii (strain SLH14081) (Blastomyces dermatitidis) protein is Mitochondrial distribution and morphology protein 12.